We begin with the raw amino-acid sequence, 328 residues long: Methionyl-tRNA formyltransferase (328 aa).

Residue 121–124 participates in (6S)-5,6,7,8-tetrahydrofolate binding; it reads SLLP.

Belongs to the Fmt family.

The catalysed reaction is L-methionyl-tRNA(fMet) + (6R)-10-formyltetrahydrofolate = N-formyl-L-methionyl-tRNA(fMet) + (6S)-5,6,7,8-tetrahydrofolate + H(+). Functionally, attaches a formyl group to the free amino group of methionyl-tRNA(fMet). The formyl group appears to play a dual role in the initiator identity of N-formylmethionyl-tRNA by promoting its recognition by IF2 and preventing the misappropriation of this tRNA by the elongation apparatus. This is Methionyl-tRNA formyltransferase from Paraburkholderia xenovorans (strain LB400).